The primary structure comprises 31 residues: Photosystem II reaction center protein T (31 aa).

A helical transmembrane segment spans residues 3–23; the sequence is AFSYVLILTLALVTLFFAVAF.

Belongs to the PsbT family. As to quaternary structure, PSII is composed of 1 copy each of membrane proteins PsbA, PsbB, PsbC, PsbD, PsbE, PsbF, PsbH, PsbI, PsbJ, PsbK, PsbL, PsbM, PsbT, PsbX, PsbY, Psb30/Ycf12, peripheral proteins PsbO, CyanoQ (PsbQ), PsbU, PsbV and a large number of cofactors. It forms dimeric complexes.

It localises to the cellular thylakoid membrane. Found at the monomer-monomer interface of the photosystem II (PS II) dimer, plays a role in assembly and dimerization of PSII. PSII is a light-driven water plastoquinone oxidoreductase, using light energy to abstract electrons from H(2)O, generating a proton gradient subsequently used for ATP formation. This chain is Photosystem II reaction center protein T, found in Prochlorococcus marinus (strain NATL2A).